A 629-amino-acid chain; its full sequence is Kelch-like protein 8 (629 aa).

Residues 1–10 are compositionally biased toward polar residues; the sequence is MASESTNGKQ. The interval 1 to 40 is disordered; sequence MASESTNGKQARSHVTKGRRQYQHQHQQQQQQQQQVRSRS. Alanine 2 is subject to N-acetylalanine. Over residues 11-23 the composition is skewed to basic residues; it reads ARSHVTKGRRQYQ. The span at 24–35 shows a compositional bias: low complexity; it reads HQHQQQQQQQQQ. Residues 76–143 enclose the BTB domain; sequence CDVTLKVGSK…VYSSRLTLTV (68 aa). In terms of domain architecture, BACK spans 178–279; it reads CLAVRAFAES…LPVDFLMGVV (102 aa). Kelch repeat units lie at residues 328–375, 376–422, 424–469, 471–516, 517–563, and 565–610; these read VLFC…SVEG, KVYA…SLGG, IYAI…ALIN, VYAV…ELHG, CLYV…TVMG, and IFAV…VCDC.

In terms of assembly, component of the BCR(KLHL8) E3 ubiquitin ligase complex, at least composed of CUL3, KLHL8 and RBX1. Interacts with RAPSN.

It functions in the pathway protein modification; protein ubiquitination. Substrate-specific adapter of a BCR (BTB-CUL3-RBX1) E3 ubiquitin ligase complex required for The BCR(KLHL8) ubiquitin ligase complex mediates ubiquitination and degradation of RAPSN. The chain is Kelch-like protein 8 (Klhl8) from Mus musculus (Mouse).